A 188-amino-acid polypeptide reads, in one-letter code: dTTP/UTP pyrophosphatase (188 aa).

Residue D67 is the Proton acceptor of the active site.

The protein belongs to the Maf family. YhdE subfamily. A divalent metal cation serves as cofactor.

The protein resides in the cytoplasm. It carries out the reaction dTTP + H2O = dTMP + diphosphate + H(+). It catalyses the reaction UTP + H2O = UMP + diphosphate + H(+). Functionally, nucleoside triphosphate pyrophosphatase that hydrolyzes dTTP and UTP. May have a dual role in cell division arrest and in preventing the incorporation of modified nucleotides into cellular nucleic acids. This is dTTP/UTP pyrophosphatase from Thermococcus kodakarensis (strain ATCC BAA-918 / JCM 12380 / KOD1) (Pyrococcus kodakaraensis (strain KOD1)).